A 252-amino-acid chain; its full sequence is MAHARPKLPRINLRLDAEYPNDPRVQQLHLQILNNPNYANNVRAPLSYLVFLTAQEMYEVFVRQARGVNKKRSGGPEKPILPANPGAGPQNAPGCGGGGSGSGGSGPPGGSAPQIQPPNNGVPSNQVSSNSGSAAGSGSGSGASSNSGAGSGAGAGSSACPSSGAGSGAGAGSSAGSNVQAPPAPPPLPQVPMVPGVVNGQEMYLPLGPVNGLPQQLGTAGSDNSGGQASSPGSQNPPTKPVAPRGKLGKGR.

A disordered region spans residues 69–252 (NKKRSGGPEK…APRGKLGKGR (184 aa)). A compositionally biased stretch (low complexity) spans 83 to 93 (ANPGAGPQNAP). Over residues 94–109 (GCGGGGSGSGGSGPPG) the composition is skewed to gly residues. Residues 182-192 (PPAPPPLPQVP) are compositionally biased toward pro residues. Residues 213–237 (LPQQLGTAGSDNSGGQASSPGSQNP) show a composition bias toward polar residues.

It belongs to the herpesviridae small capsomere-interacting protein family. As to quaternary structure, interacts with the major capsid protein/MCP.

The protein resides in the virion. It localises to the host nucleus. Functionally, participates in the assembly of the infectious particles by decorating the outer surface of the capsid shell and thus forming a layer between the capsid and the tegument. Complexes composed of the major capsid protein and small capsomere-interacting protein/SCP assemble together in the host cytoplasm and are translocated to the nucleus, where they accumulate and participate in capsid assembly. This Connochaetes taurinus (Blue wildebeest) protein is Small capsomere-interacting protein.